We begin with the raw amino-acid sequence, 406 residues long: Cysteine desulfurase (406 aa).

Residue lysine 226 is modified to N6-(pyridoxal phosphate)lysine. The active-site Cysteine persulfide intermediate is cysteine 364.

This sequence belongs to the class-V pyridoxal-phosphate-dependent aminotransferase family. Csd subfamily. As to quaternary structure, homodimer. Interacts with SufE and the SufBCD complex composed of SufB, SufC and SufD. The interaction with SufE is required to mediate the direct transfer of the sulfur atom from the S-sulfanylcysteine. Requires pyridoxal 5'-phosphate as cofactor.

It localises to the cytoplasm. The enzyme catalyses (sulfur carrier)-H + L-cysteine = (sulfur carrier)-SH + L-alanine. It carries out the reaction L-selenocysteine + AH2 = hydrogenselenide + L-alanine + A + H(+). It functions in the pathway cofactor biosynthesis; iron-sulfur cluster biosynthesis. Cysteine desulfurases mobilize the sulfur from L-cysteine to yield L-alanine, an essential step in sulfur metabolism for biosynthesis of a variety of sulfur-containing biomolecules. Component of the suf operon, which is activated and required under specific conditions such as oxidative stress and iron limitation. Acts as a potent selenocysteine lyase in vitro, that mobilizes selenium from L-selenocysteine. Selenocysteine lyase activity is however unsure in vivo. In Cronobacter sakazakii (strain ATCC BAA-894) (Enterobacter sakazakii), this protein is Cysteine desulfurase.